A 474-amino-acid polypeptide reads, in one-letter code: Trehalose-6-phosphate synthase (474 aa).

A D-glucose 6-phosphate-binding site is contributed by Arg-10. 22–23 is a UDP-alpha-D-glucose binding site; the sequence is GG. D-glucose 6-phosphate is bound by residues Tyr-77 and Asp-131. UDP-alpha-D-glucose contacts are provided by Arg-263 and Lys-268. Arg-301 is a binding site for D-glucose 6-phosphate. UDP-alpha-D-glucose is bound by residues Phe-340 and 366 to 370; that span reads LVAKE.

It belongs to the glycosyltransferase 20 family. Homotetramer.

The catalysed reaction is D-glucose 6-phosphate + UDP-alpha-D-glucose = alpha,alpha-trehalose 6-phosphate + UDP + H(+). It participates in glycan biosynthesis; trehalose biosynthesis. In terms of biological role, probably involved in the osmoprotection via the biosynthesis of trehalose. Catalyzes the transfer of glucose from UDP-alpha-D-glucose (UDP-Glc) to D-glucose 6-phosphate (Glc-6-P) to form trehalose-6-phosphate. Acts with retention of the anomeric configuration of the UDP-sugar donor. This chain is Trehalose-6-phosphate synthase, found in Pseudomonas savastanoi (Pseudomonas syringae pv. savastanoi).